Here is a 160-residue protein sequence, read N- to C-terminus: MIRIGHGFDVHAFGEKRPLIIGGVTIPYHTGFIAHSDGDVALHALTDALLGAAALGDIGKLFPDTDQQYKNIDSRKLLIEAYRQVQTKGYQISNIDITIIAQAPKMRPHIDNMRQLIANDLNCDIDQINIKATTTEKLGFTGRGEGIACEAVALLSKKTV.

Asp-9 and His-11 together coordinate a divalent metal cation. Residues 9–11 (DVH) and 35–36 (HS) contribute to the 4-CDP-2-C-methyl-D-erythritol 2-phosphate site. An a divalent metal cation-binding site is contributed by His-43. Residues 57 to 59 (DIG), 62 to 66 (FPDTD), 133 to 136 (TTTE), Phe-140, and Arg-143 each bind 4-CDP-2-C-methyl-D-erythritol 2-phosphate.

It belongs to the IspF family. As to quaternary structure, homotrimer. A divalent metal cation serves as cofactor.

The catalysed reaction is 4-CDP-2-C-methyl-D-erythritol 2-phosphate = 2-C-methyl-D-erythritol 2,4-cyclic diphosphate + CMP. It functions in the pathway isoprenoid biosynthesis; isopentenyl diphosphate biosynthesis via DXP pathway; isopentenyl diphosphate from 1-deoxy-D-xylulose 5-phosphate: step 4/6. Its function is as follows. Involved in the biosynthesis of isopentenyl diphosphate (IPP) and dimethylallyl diphosphate (DMAPP), two major building blocks of isoprenoid compounds. Catalyzes the conversion of 4-diphosphocytidyl-2-C-methyl-D-erythritol 2-phosphate (CDP-ME2P) to 2-C-methyl-D-erythritol 2,4-cyclodiphosphate (ME-CPP) with a corresponding release of cytidine 5-monophosphate (CMP). In Haemophilus ducreyi (strain 35000HP / ATCC 700724), this protein is 2-C-methyl-D-erythritol 2,4-cyclodiphosphate synthase.